The sequence spans 269 residues: Regulatory protein RecX (269 aa).

The protein belongs to the RecX family.

Its subcellular location is the cytoplasm. Modulates RecA activity. The protein is Regulatory protein RecX of Geobacillus kaustophilus (strain HTA426).